The chain runs to 348 residues: RNA 3'-terminal phosphate cyclase (348 aa).

ATP-binding positions include Gln-107 and 290 to 294; that span reads HLADQ. His-316 acts as the Tele-AMP-histidine intermediate in catalysis.

Belongs to the RNA 3'-terminal cyclase family. Type 1 subfamily.

It localises to the cytoplasm. The catalysed reaction is a 3'-end 3'-phospho-ribonucleotide-RNA + ATP = a 3'-end 2',3'-cyclophospho-ribonucleotide-RNA + AMP + diphosphate. Its function is as follows. Catalyzes the conversion of 3'-phosphate to a 2',3'-cyclic phosphodiester at the end of RNA. The mechanism of action of the enzyme occurs in 3 steps: (A) adenylation of the enzyme by ATP; (B) transfer of adenylate to an RNA-N3'P to produce RNA-N3'PP5'A; (C) and attack of the adjacent 2'-hydroxyl on the 3'-phosphorus in the diester linkage to produce the cyclic end product. The biological role of this enzyme is unknown but it is likely to function in some aspects of cellular RNA processing. This chain is RNA 3'-terminal phosphate cyclase, found in Nostoc punctiforme (strain ATCC 29133 / PCC 73102).